The chain runs to 496 residues: L-arabinose isomerase (496 aa).

4 residues coordinate Mn(2+): Glu302, Glu329, His346, and His445.

This sequence belongs to the arabinose isomerase family. Mn(2+) is required as a cofactor.

It carries out the reaction beta-L-arabinopyranose = L-ribulose. It participates in carbohydrate degradation; L-arabinose degradation via L-ribulose; D-xylulose 5-phosphate from L-arabinose (bacterial route): step 1/3. Its function is as follows. Catalyzes the conversion of L-arabinose to L-ribulose. This chain is L-arabinose isomerase, found in Thermotoga maritima (strain ATCC 43589 / DSM 3109 / JCM 10099 / NBRC 100826 / MSB8).